Reading from the N-terminus, the 406-residue chain is Phloroisovalerophenone synthase (406 aa).

Residue Cys171 is part of the active site.

It belongs to the thiolase-like superfamily. Chalcone/stilbene synthases family.

The catalysed reaction is 3-methylbutanoyl-CoA + 3 malonyl-CoA + 3 H(+) = phlorisovalerophenone + 3 CO2 + 4 CoA. Produces 3-methyl-1-(2,4,6-trihydroxyphenyl)butan-1-one (phloroisovalerophenone). In Psilotum nudum (Whisk fern), this protein is Phloroisovalerophenone synthase (VPS).